Consider the following 265-residue polypeptide: Hydroxyethylthiazole kinase (265 aa).

Position 43 (M43) interacts with substrate. Positions 119 and 165 each coordinate ATP. A192 is a binding site for substrate.

It belongs to the Thz kinase family. Mg(2+) is required as a cofactor.

It catalyses the reaction 5-(2-hydroxyethyl)-4-methylthiazole + ATP = 4-methyl-5-(2-phosphooxyethyl)-thiazole + ADP + H(+). It functions in the pathway cofactor biosynthesis; thiamine diphosphate biosynthesis; 4-methyl-5-(2-phosphoethyl)-thiazole from 5-(2-hydroxyethyl)-4-methylthiazole: step 1/1. Its function is as follows. Catalyzes the phosphorylation of the hydroxyl group of 4-methyl-5-beta-hydroxyethylthiazole (THZ). This Haemophilus influenzae (strain 86-028NP) protein is Hydroxyethylthiazole kinase.